The sequence spans 123 residues: Ribosome-binding factor A (123 aa).

This sequence belongs to the RbfA family. Monomer. Binds 30S ribosomal subunits, but not 50S ribosomal subunits or 70S ribosomes.

The protein resides in the cytoplasm. Functionally, one of several proteins that assist in the late maturation steps of the functional core of the 30S ribosomal subunit. Associates with free 30S ribosomal subunits (but not with 30S subunits that are part of 70S ribosomes or polysomes). Required for efficient processing of 16S rRNA. May interact with the 5'-terminal helix region of 16S rRNA. This Solibacter usitatus (strain Ellin6076) protein is Ribosome-binding factor A.